A 184-amino-acid chain; its full sequence is Uroplakin-2 (184 aa).

Residues 1 to 25 (MAPLLPIRTLPLILILLALLSPGAA) form the signal peptide. Positions 26-84 (DFNISSLSGLLSPALTESLLVALPPCHLTGGNATLMVRRANDSKVVTSSFVVPPCRGRR) are excised as a propeptide. Residues asparagine 28, asparagine 57, and asparagine 66 are each glycosylated (N-linked (GlcNAc...) asparagine). Residues 85 to 155 (ELVSVVDSGA…IGLGMARTGG (71 aa)) lie on the Lumenal side of the membrane. The chain crosses the membrane as a helical span at residues 156-176 (MVVITVLLSVAMFLLVLGFII). Residues 177 to 184 (ALALGSRK) lie on the Cytoplasmic side of the membrane.

It belongs to the uroplakin-2 family. In terms of assembly, interacts with uroplakin-1a (UPK1A). In terms of tissue distribution, expressed in ureter.

It localises to the cell membrane. Its function is as follows. Component of the asymmetric unit membrane (AUM); a highly specialized biomembrane elaborated by terminally differentiated urothelial cells. May play an important role in regulating the assembly of the AUM. In Homo sapiens (Human), this protein is Uroplakin-2 (UPK2).